The following is a 425-amino-acid chain: Probable isoprenylcysteine alpha-carbonyl methylesterase ICMEL1 (425 aa).

The segment covering 1–10 (MQVELADRAA) has biased composition (basic and acidic residues). The interval 1 to 42 (MQVELADRAAARPSETGEAPPSSPAAAAAASAAAEDAPLLPG) is disordered. Positions 24–34 (PAAAAAASAAA) are enriched in low complexity. Transmembrane regions (helical) follow at residues 99–119 (FLAL…VVYY) and 154–174 (VVAF…GALL). Substrate-binding positions include 160–162 (GGA) and 231–233 (QSA). Residues serine 232, aspartate 334, and histidine 366 contribute to the active site.

The protein belongs to the AB hydrolase superfamily. Isoprenylcysteine methylesterase family.

Its subcellular location is the endoplasmic reticulum membrane. It localises to the golgi apparatus membrane. The enzyme catalyses [protein]-C-terminal S-[(2E,6E)-farnesyl]-L-cysteine methyl ester + H2O = [protein]-C-terminal S-[(2E,6E)-farnesyl]-L-cysteine + methanol + H(+). Catalyzes the demethylation of isoprenylcysteine methylesters. This is Probable isoprenylcysteine alpha-carbonyl methylesterase ICMEL1 (IMCEL1) from Oryza sativa subsp. japonica (Rice).